The following is a 252-amino-acid chain: 14-3-3-like protein GF14 omicron (252 aa).

Phosphoserine occurs at positions 65 and 188.

The protein belongs to the 14-3-3 family.

The protein resides in the nucleus. Its subcellular location is the cytoplasm. Its function is as follows. Is associated with a DNA binding complex that binds to the G box, a well-characterized cis-acting DNA regulatory element found in plant genes. The protein is 14-3-3-like protein GF14 omicron (GRF11) of Arabidopsis thaliana (Mouse-ear cress).